The sequence spans 223 residues: UPF0441 protein YgiB (223 aa).

Positions Glu201–Gly223 are disordered. Over residues Ala204–Gly223 the composition is skewed to polar residues.

It belongs to the UPF0441 family.

This is UPF0441 protein YgiB from Salmonella arizonae (strain ATCC BAA-731 / CDC346-86 / RSK2980).